We begin with the raw amino-acid sequence, 437 residues long: MLTAFAPAFKTPDLRKKLLFTLGIIVVYRLGTHIPIPGVDYKNVQECVDQASGNQGLFGLVNMFSGGALLQITVFALGIMPYITASIILQLLTVVIPRLEALKKEGQAGTAKITQYTRYLTVALAILQGTGLVATARSGALFSGCTVAGQIVPDQAIFTTVVMVICMTAGTCVVMWLGELITDRGIGNGMSILMFISIAATFPSALWAIKKQGELADGWIEFGTVILVGLVMVGLVVFVEQAQRRIPVQYAKRMIGRRSYGGTSTYIPLKVNQAGVIPVIFASSLLYIPALIVQFSNSTAGWATWITKNLADTAATPHIILYFFLIVFFAFFYVAISFNPEEVADNMKKYGGFIPGIRAGRPTAEYLSYVLNRITWPGSLYLGLIALVPTMALAGFGANQNFPFGGTSILIIVGVGLETVKQIESQLQQRNYEGFLR.

The next 10 membrane-spanning stretches (helical) occupy residues 19 to 39 (LFTL…IPGV), 69 to 89 (LLQI…SIIL), 122 to 142 (VALA…GALF), 157 to 177 (IFTT…VMWL), 189 to 209 (GMSI…LWAI), 219 to 239 (WIEF…VVFV), 275 to 295 (GVIP…IVQF), 318 to 338 (HIIL…AISF), 378 to 398 (GSLY…GFGA), and 400 to 420 (QNFP…LETV).

This sequence belongs to the SecY/SEC61-alpha family. As to quaternary structure, component of the Sec protein translocase complex. Heterotrimer consisting of SecY, SecE and SecG subunits. The heterotrimers can form oligomers, although 1 heterotrimer is thought to be able to translocate proteins. Interacts with the ribosome. Interacts with SecDF, and other proteins may be involved. Interacts with SecA.

It localises to the cell membrane. In terms of biological role, the central subunit of the protein translocation channel SecYEG. Consists of two halves formed by TMs 1-5 and 6-10. These two domains form a lateral gate at the front which open onto the bilayer between TMs 2 and 7, and are clamped together by SecE at the back. The channel is closed by both a pore ring composed of hydrophobic SecY resides and a short helix (helix 2A) on the extracellular side of the membrane which forms a plug. The plug probably moves laterally to allow the channel to open. The ring and the pore may move independently. This Streptomyces lividans protein is Protein translocase subunit SecY.